The sequence spans 701 residues: Peptide transporter 3 (701 aa).

Helical transmembrane passes span 29 to 49 (FSFY…HEFS), 55 to 75 (FIYH…SIMA), 91 to 111 (IYVV…SYPI), 119 to 139 (GLFV…AFAA), 154 to 174 (FSFF…ITPI), 188 to 208 (FPLA…LFLM), 269 to 289 (GLLN…LFDQ), 318 to 338 (INPV…YPAL), and 351 to 371 (AVGG…QLKV). N-linked (GlcNAc...) asparagine glycosylation is found at N391 and N432. Transmembrane regions (helical) follow at residues 575-595 (ILWS…LSVT), 611-631 (VLTA…MMIS), and 641-661 (LEFF…ILLA).

This sequence belongs to the major facilitator superfamily. Proton-dependent oligopeptide transporter (POT/PTR) (TC 2.A.17) family. As to expression, expressed in the AVA interneuron.

The protein localises to the membrane. Neuron-specific, H(+)-coupled oligopeptide transporter with broad specificity towards di- and tripeptides in a Na(+) and Cl(-)-independent manner. Shows H(+) channel activity in the absence of peptide substrates. The sequence is that of Peptide transporter 3 (pept-3) from Caenorhabditis elegans.